A 162-amino-acid chain; its full sequence is 6,7-dimethyl-8-ribityllumazine synthase (162 aa).

5-amino-6-(D-ribitylamino)uracil-binding positions include Phe-22, 56-58 (TFE), and 80-82 (AVI). 85 to 86 (GT) provides a ligand contact to (2S)-2-hydroxy-3-oxobutyl phosphate. His-88 (proton donor) is an active-site residue. Met-113 serves as a coordination point for 5-amino-6-(D-ribitylamino)uracil. Arg-127 provides a ligand contact to (2S)-2-hydroxy-3-oxobutyl phosphate.

The protein belongs to the DMRL synthase family.

It catalyses the reaction (2S)-2-hydroxy-3-oxobutyl phosphate + 5-amino-6-(D-ribitylamino)uracil = 6,7-dimethyl-8-(1-D-ribityl)lumazine + phosphate + 2 H2O + H(+). Its pathway is cofactor biosynthesis; riboflavin biosynthesis; riboflavin from 2-hydroxy-3-oxobutyl phosphate and 5-amino-6-(D-ribitylamino)uracil: step 1/2. Its function is as follows. Catalyzes the formation of 6,7-dimethyl-8-ribityllumazine by condensation of 5-amino-6-(D-ribitylamino)uracil with 3,4-dihydroxy-2-butanone 4-phosphate. This is the penultimate step in the biosynthesis of riboflavin. The protein is 6,7-dimethyl-8-ribityllumazine synthase of Anaeromyxobacter dehalogenans (strain 2CP-1 / ATCC BAA-258).